The chain runs to 111 residues: Disintegrin DS-AS (111 aa).

Positions 1–20 (MIQVLLVIICLAVFPYQGSC) are cleaved as a signal peptide. Positions 21 to 47 (IILESGNVNDYEIVYPKKLIVLPTGAM) are excised as a propeptide. One can recognise a Disintegrin domain in the interval 47 to 111 (MNSPHPCCDP…PDCPRNPYKD (65 aa)). Cystine bridges form between Cys53–Cys76, Cys67–Cys73, Cys72–Cys97, and Cys85–Cys104. A Cell attachment site motif is present at residues 89-91 (RGD).

In terms of assembly, heterodimer; disulfide-linked.

The protein localises to the secreted. Inhibits ADP-induced platelet aggregation in human platelet-rich plasma (IC(50) is 8 uM). The chain is Disintegrin DS-AS from Atheris squamigera (Variable bush viper).